Reading from the N-terminus, the 274-residue chain is Dermonecrotic toxin SdSicTox-betaIIB1bx (274 aa).

The active site involves H5. Positions 25 and 27 each coordinate Mg(2+). The active-site Nucleophile is H41. Cystine bridges form between C45–C51 and C47–C190. D85 serves as a coordination point for Mg(2+).

This sequence belongs to the arthropod phospholipase D family. Class II subfamily. The cofactor is Mg(2+). Expressed by the venom gland.

The protein resides in the secreted. The catalysed reaction is an N-(acyl)-sphingosylphosphocholine = an N-(acyl)-sphingosyl-1,3-cyclic phosphate + choline. It catalyses the reaction an N-(acyl)-sphingosylphosphoethanolamine = an N-(acyl)-sphingosyl-1,3-cyclic phosphate + ethanolamine. It carries out the reaction a 1-acyl-sn-glycero-3-phosphocholine = a 1-acyl-sn-glycero-2,3-cyclic phosphate + choline. The enzyme catalyses a 1-acyl-sn-glycero-3-phosphoethanolamine = a 1-acyl-sn-glycero-2,3-cyclic phosphate + ethanolamine. Functionally, dermonecrotic toxins cleave the phosphodiester linkage between the phosphate and headgroup of certain phospholipids (sphingolipid and lysolipid substrates), forming an alcohol (often choline) and a cyclic phosphate. This toxin acts on sphingomyelin (SM). It may also act on ceramide phosphoethanolamine (CPE), lysophosphatidylcholine (LPC) and lysophosphatidylethanolamine (LPE), but not on lysophosphatidylserine (LPS), and lysophosphatidylglycerol (LPG). It acts by transphosphatidylation, releasing exclusively cyclic phosphate products as second products. Induces dermonecrosis, hemolysis, increased vascular permeability, edema, inflammatory response, and platelet aggregation. The polypeptide is Dermonecrotic toxin SdSicTox-betaIIB1bx (Sicarius cf. damarensis (strain GJB-2008) (Six-eyed sand spider)).